Here is a 361-residue protein sequence, read N- to C-terminus: Probable dual-specificity RNA methyltransferase RlmN (361 aa).

The active-site Proton acceptor is the Glu-91. The Radical SAM core domain maps to 97 to 335 (QHYGLSVCVT…CVVRQEHGTD (239 aa)). Residues Cys-104 and Cys-340 are joined by a disulfide bond. [4Fe-4S] cluster-binding residues include Cys-111, Cys-115, and Cys-118. Residues 163–164 (GE), Ser-195, 218–220 (SLH), and Asn-296 each bind S-adenosyl-L-methionine. Cys-340 acts as the S-methylcysteine intermediate in catalysis.

The protein belongs to the radical SAM superfamily. RlmN family. The cofactor is [4Fe-4S] cluster.

It is found in the cytoplasm. The catalysed reaction is adenosine(2503) in 23S rRNA + 2 reduced [2Fe-2S]-[ferredoxin] + 2 S-adenosyl-L-methionine = 2-methyladenosine(2503) in 23S rRNA + 5'-deoxyadenosine + L-methionine + 2 oxidized [2Fe-2S]-[ferredoxin] + S-adenosyl-L-homocysteine. The enzyme catalyses adenosine(37) in tRNA + 2 reduced [2Fe-2S]-[ferredoxin] + 2 S-adenosyl-L-methionine = 2-methyladenosine(37) in tRNA + 5'-deoxyadenosine + L-methionine + 2 oxidized [2Fe-2S]-[ferredoxin] + S-adenosyl-L-homocysteine. Functionally, specifically methylates position 2 of adenine 2503 in 23S rRNA and position 2 of adenine 37 in tRNAs. The chain is Probable dual-specificity RNA methyltransferase RlmN from Streptococcus mutans serotype c (strain ATCC 700610 / UA159).